We begin with the raw amino-acid sequence, 100 residues long: MSKKSIIEREKKRKSLVKKYKNLRNFIKKEIKNELNFFEKIFLNFKLQKFPRDSSPCRLHNRCYLTGRPRGYYRFFGLSRHIFRDMAHYGLLPGVTKSSW.

It belongs to the universal ribosomal protein uS14 family. As to quaternary structure, part of the 30S ribosomal subunit.

It is found in the plastid. Its function is as follows. Binds 16S rRNA, required for the assembly of 30S particles. This is Small ribosomal subunit protein uS14c from Euglena longa (Euglenophycean alga).